Here is a 512-residue protein sequence, read N- to C-terminus: Maturase K (512 aa).

This sequence belongs to the intron maturase 2 family. MatK subfamily.

It is found in the plastid. The protein localises to the chloroplast. Usually encoded in the trnK tRNA gene intron. Probably assists in splicing its own and other chloroplast group II introns. This Lemna gibba (Swollen duckweed) protein is Maturase K.